The following is a 494-amino-acid chain: Probable cytochrome P450 313a4 (494 aa).

Residue cysteine 440 participates in heme binding.

This sequence belongs to the cytochrome P450 family. The cofactor is heme.

The protein resides in the endoplasmic reticulum membrane. It localises to the microsome membrane. Its function is as follows. May be involved in the metabolism of insect hormones and in the breakdown of synthetic insecticides. This Drosophila melanogaster (Fruit fly) protein is Probable cytochrome P450 313a4 (Cyp313a4).